A 376-amino-acid polypeptide reads, in one-letter code: tRNA(Met) cytidine acetate ligase (376 aa).

Residues 7–20 (IAEY…HYYQ), glycine 102, asparagine 160, and arginine 181 each bind ATP.

This sequence belongs to the TmcAL family.

Its subcellular location is the cytoplasm. It catalyses the reaction cytidine(34) in elongator tRNA(Met) + acetate + ATP = N(4)-acetylcytidine(34) in elongator tRNA(Met) + AMP + diphosphate. Catalyzes the formation of N(4)-acetylcytidine (ac(4)C) at the wobble position of elongator tRNA(Met), using acetate and ATP as substrates. First activates an acetate ion to form acetyladenylate (Ac-AMP) and then transfers the acetyl group to tRNA to form ac(4)C34. This Exiguobacterium sp. (strain ATCC BAA-1283 / AT1b) protein is tRNA(Met) cytidine acetate ligase.